The primary structure comprises 235 residues: tRNA pseudouridine synthase B (235 aa).

The active-site Nucleophile is Asp48.

It belongs to the pseudouridine synthase TruB family. Type 1 subfamily.

It carries out the reaction uridine(55) in tRNA = pseudouridine(55) in tRNA. Functionally, responsible for synthesis of pseudouridine from uracil-55 in the psi GC loop of transfer RNAs. The polypeptide is tRNA pseudouridine synthase B (Phocaeicola vulgatus (strain ATCC 8482 / DSM 1447 / JCM 5826 / CCUG 4940 / NBRC 14291 / NCTC 11154) (Bacteroides vulgatus)).